The sequence spans 483 residues: Glutamyl-tRNA(Gln) amidotransferase subunit A (483 aa).

Residues Lys-75 and Ser-150 each act as charge relay system in the active site. Ser-174 acts as the Acyl-ester intermediate in catalysis.

This sequence belongs to the amidase family. GatA subfamily. In terms of assembly, heterotrimer of A, B and C subunits.

The enzyme catalyses L-glutamyl-tRNA(Gln) + L-glutamine + ATP + H2O = L-glutaminyl-tRNA(Gln) + L-glutamate + ADP + phosphate + H(+). In terms of biological role, allows the formation of correctly charged Gln-tRNA(Gln) through the transamidation of misacylated Glu-tRNA(Gln) in organisms which lack glutaminyl-tRNA synthetase. The reaction takes place in the presence of glutamine and ATP through an activated gamma-phospho-Glu-tRNA(Gln). The chain is Glutamyl-tRNA(Gln) amidotransferase subunit A from Gloeothece citriformis (strain PCC 7424) (Cyanothece sp. (strain PCC 7424)).